Reading from the N-terminus, the 131-residue chain is Holo-[acyl-carrier-protein] synthase (131 aa).

Residues Asp-8 and Glu-59 each coordinate Mg(2+).

Belongs to the P-Pant transferase superfamily. AcpS family. Requires Mg(2+) as cofactor.

The protein resides in the cytoplasm. It carries out the reaction apo-[ACP] + CoA = holo-[ACP] + adenosine 3',5'-bisphosphate + H(+). Its function is as follows. Transfers the 4'-phosphopantetheine moiety from coenzyme A to a Ser of acyl-carrier-protein. This Rickettsia rickettsii (strain Sheila Smith) protein is Holo-[acyl-carrier-protein] synthase.